The sequence spans 85 residues: MKLLLLLTISASMLIEGLVNADGYIRGGDGCKVSCVINHVFCDNECKAAGGSYGYCWGWGLACWCEGLPADREWDYETDTCGGKK.

The signal sequence occupies residues 1-21 (MKLLLLLTISASMLIEGLVNA). The region spanning 22 to 82 (DGYIRGGDGC…EWDYETDTCG (61 aa)) is the LCN-type CS-alpha/beta domain. Intrachain disulfides connect C31–C81, C35–C56, C42–C63, and C46–C65. The residue at position 82 (G82) is a Glycine amide.

Belongs to the long (4 C-C) scorpion toxin superfamily. Sodium channel inhibitor family. Beta subfamily. In terms of tissue distribution, expressed by the venom gland.

It localises to the secreted. Depressant insect beta-toxins cause a transient contraction paralysis followed by a slow flaccid paralysis. They bind voltage-independently at site-4 of sodium channels (Nav) and block action potentials, primarily by depolarizing the axonal membrane and suppressing the sodium current. This depressant toxin is active only on insects. It is found in a relatively small amount in the venom. The sequence is that of Beta-insect depressant toxin Lqh-dprIT3f from Leiurus hebraeus (Hebrew deathstalker scorpion).